Reading from the N-terminus, the 518-residue chain is Voltage-gated potassium channel regulatory subunit KCNG2 (518 aa).

The Cytoplasmic portion of the chain corresponds to 1–214 (MALLTGNADR…DMVENPHSGI (214 aa)). The helical transmembrane segment at 215 to 236 (PGKIFACISISFVAITAVSLCI) threads the bilayer. Over 237–257 (STMPDVREEEDRGECSQKCYD) the chain is Extracellular. Residues 258 to 279 (IFVLETVCVAWFSFEFLLRSIQ) traverse the membrane as a helical segment. The Cytoplasmic segment spans residues 280–290 (AENKCAFLKTP). The helical transmembrane segment at 291–311 (LNIIDILAILPFYISLIVDMA) threads the bilayer. Residues 312-331 (STKNSSKPGGGAGNKYLERV) are Extracellular-facing. The helical; Voltage-sensor transmembrane segment at 332–352 (GLVLRFLRALRILYVMRLARH) threads the bilayer. The Cytoplasmic segment spans residues 353 to 367 (SLGLQTLGLTVRRCT). A helical membrane pass occupies residues 368-389 (REFGLLLLFLCVAMALFSPLVY). The Extracellular portion of the chain corresponds to 390-404 (LAESELGAKQEFTSI). Residues 405 to 416 (PTSYWWAVISMT) constitute an intramembrane region (helical). The Selectivity filter motif lies at 417–422 (TVGYGD). Residues 417–424 (TVGYGDMV) lie within the membrane without spanning it. The Extracellular segment spans residues 425–431 (PRSIPGQ). Residues 432 to 460 (VVALSSILSGILLMAFPVTSIFHTFSRSY) form a helical membrane-spanning segment. Topologically, residues 461 to 518 (SELKEQQQRAASRQMHQLEESTKLAGGGSSQWITAASPPDAAREDGRPELDQEAKRSC) are cytoplasmic. A disordered region spans residues 473–518 (RQMHQLEESTKLAGGGSSQWITAASPPDAAREDGRPELDQEAKRSC). The span at 501 to 518 (AAREDGRPELDQEAKRSC) shows a compositional bias: basic and acidic residues.

The protein belongs to the potassium channel family. G (TC 1.A.1.2) subfamily. Kv6.2/KCNG2 sub-subfamily. In terms of assembly, heterodimer with KCNB1.

It localises to the cell membrane. Regulatory alpha-subunit of the voltage-gated potassium (Kv) channel which, when coassembled with KCNB1, can modulate the kinetics and conductance-voltage relationship. Modulates channel activity by shifting the threshold and the half-maximal activation to more negative values. Potassium channel subunit that does not form functional channels by itself. In Gallus gallus (Chicken), this protein is Voltage-gated potassium channel regulatory subunit KCNG2.